A 98-amino-acid polypeptide reads, in one-letter code: NADH-ubiquinone oxidoreductase chain 4L (98 aa).

3 helical membrane-spanning segments follow: residues Met-1 to Met-21, Ser-29 to Leu-49, and Ile-61 to Ile-81.

The protein belongs to the complex I subunit 4L family. Core subunit of respiratory chain NADH dehydrogenase (Complex I) which is composed of 45 different subunits.

The protein localises to the mitochondrion inner membrane. The enzyme catalyses a ubiquinone + NADH + 5 H(+)(in) = a ubiquinol + NAD(+) + 4 H(+)(out). Functionally, core subunit of the mitochondrial membrane respiratory chain NADH dehydrogenase (Complex I) which catalyzes electron transfer from NADH through the respiratory chain, using ubiquinone as an electron acceptor. Part of the enzyme membrane arm which is embedded in the lipid bilayer and involved in proton translocation. The polypeptide is NADH-ubiquinone oxidoreductase chain 4L (MT-ND4L) (Ceratotherium simum (White rhinoceros)).